The primary structure comprises 122 residues: Large ribosomal subunit protein uL14c (122 aa).

Belongs to the universal ribosomal protein uL14 family. In terms of assembly, part of the 50S ribosomal subunit.

The protein resides in the plastid. In terms of biological role, binds to 23S rRNA. This Cuscuta reflexa (Southern Asian dodder) protein is Large ribosomal subunit protein uL14c.